We begin with the raw amino-acid sequence, 317 residues long: MYTKIIGTGSYLPEQVRTNADLEKMVETSDEWIVTRTGIRKRHIAAPNETVATMGFTAANRAIEMAGIDKDQIGLIVVATTSATHAFPSAACQIQSMLGIKGCPAFDVAAACAGFTYALSIADQYVKSGAVKHALVVGSDVLARTCDPGDRGTIIIFGDGAGAAVLSASEEPGIISTHLHADGRYGELLTLPNADRVNPDNPIYLTMAGNEVFKVAVTELAHIVDETLAANNLDRSELDWLVPHQANLRIISATAKKLGMSMDNVVVTLDRHGNTSAASVPCALDEAVRDGRIKAGQLVLLEAFGGGFTWGSALIRF.

Residues Cys-112 and His-244 contribute to the active site. The interval 245–249 (QANLR) is ACP-binding. Residue Asn-274 is part of the active site.

This sequence belongs to the thiolase-like superfamily. FabH family. Homodimer.

The protein resides in the cytoplasm. It catalyses the reaction malonyl-[ACP] + acetyl-CoA + H(+) = 3-oxobutanoyl-[ACP] + CO2 + CoA. It participates in lipid metabolism; fatty acid biosynthesis. In terms of biological role, catalyzes the condensation reaction of fatty acid synthesis by the addition to an acyl acceptor of two carbons from malonyl-ACP. Catalyzes the first condensation reaction which initiates fatty acid synthesis and may therefore play a role in governing the total rate of fatty acid production. Possesses both acetoacetyl-ACP synthase and acetyl transacylase activities. Its substrate specificity determines the biosynthesis of branched-chain and/or straight-chain of fatty acids. In Salmonella typhimurium (strain LT2 / SGSC1412 / ATCC 700720), this protein is Beta-ketoacyl-[acyl-carrier-protein] synthase III.